We begin with the raw amino-acid sequence, 152 residues long: Toxin coregulated pilus biosynthesis protein S (152 aa).

An N-terminal signal peptide occupies residues Met1–Ala20.

It is found in the periplasm. The protein localises to the secreted. In terms of biological role, the toxin coregulated pilus (TCP) is essential for successful colonization of the small intestine. The sequence is that of Toxin coregulated pilus biosynthesis protein S (tcpS) from Vibrio cholerae serotype O1 (strain ATCC 39315 / El Tor Inaba N16961).